The chain runs to 153 residues: Satratoxin biosynthesis SC2 cluster transcription factor SAT15 (153 aa).

Its subcellular location is the nucleus. Transcriptional regulator that may regulate the expression of the satratoxin biosynthesis SC2 cluster, one of the 3 clusters involved in the biosynthesis of satratoxins, trichothecene mycotoxins that are associated with human food poisonings. The polypeptide is Satratoxin biosynthesis SC2 cluster transcription factor SAT15 (Stachybotrys chartarum (strain CBS 109288 / IBT 7711) (Toxic black mold)).